The primary structure comprises 298 residues: 3-sulfolactaldehyde reductase (298 aa).

Residues 11–12 (QM), Asp-31, Leu-65, and Thr-96 contribute to the NAD(+) site. Position 123 (Arg-123) interacts with 2,3-dihydroxypropane-1-sulfonate. The active site involves Lys-171. Residue 174–178 (NNYMS) coordinates 2,3-dihydroxypropane-1-sulfonate. Lys-240 contacts NAD(+).

This sequence belongs to the HIBADH-related family. 3-sulfolactaldehyde reductase subfamily. In terms of assembly, homotetramer. Dimer of dimers.

It catalyses the reaction (2S)-3-sulfopropanediol + NAD(+) = (2S)-3-sulfolactaldehyde + NADH + H(+). It carries out the reaction 4-hydroxybutanoate + NAD(+) = succinate semialdehyde + NADH + H(+). Inhibited by the NADH analogs tetrahydro-NADH and hexahydro-NADH. Reduces 3-sulfolactaldehyde (SLA) to 2,3-dihydroxypropane 1-sulfonate (DHPS). Metabolite profiling studies showed that the enzyme also catalyzes in vitro the NADH-dependent reduction of succinic semialdehyde (SSA) to 4-hydroxybutyrate (GHB), and that it could be involved in the metabolism of SSA, and other potentially toxic intermediates that may accumulate under stress conditions. However, the enzyme exhibits a 42,000-fold greater catalytic efficiency for the reduction of SLA over SSA. Shows no detectable activity on the analogous glycolytic intermediate glyceraldehyde-3-phosphate. This chain is 3-sulfolactaldehyde reductase (yihU), found in Escherichia coli (strain K12).